We begin with the raw amino-acid sequence, 316 residues long: tRNA-splicing endonuclease subunit Sen34 (316 aa).

The disordered stretch occupies residues Gln120 to Leu184. 2 stretches are compositionally biased toward polar residues: residues Glu144 to Ala159 and Leu168 to Val181. Active-site residues include Tyr253, His261, and Lys292.

Belongs to the tRNA-intron endonuclease family. As to quaternary structure, tRNA splicing endonuclease is a heterotetramer composed of TSEN2, TSEN15, TSEN34/LENG5 and TSEN54. tRNA splicing endonuclease complex also contains proteins of the pre-mRNA 3'-end processing machinery such as CLP1, CPSF1, CPSF4 and CSTF2.

It localises to the nucleus. The protein resides in the nucleolus. The enzyme catalyses pretRNA = a 3'-half-tRNA molecule with a 5'-OH end + a 5'-half-tRNA molecule with a 2',3'-cyclic phosphate end + an intron with a 2',3'-cyclic phosphate and a 5'-hydroxyl terminus.. Constitutes one of the two catalytic subunit of the tRNA-splicing endonuclease complex, a complex responsible for identification and cleavage of the splice sites in pre-tRNA. It cleaves pre-tRNA at the 5'- and 3'-splice sites to release the intron. The products are an intron and two tRNA half-molecules bearing 2',3'-cyclic phosphate and 5'-OH termini. There are no conserved sequences at the splice sites, but the intron is invariably located at the same site in the gene, placing the splice sites an invariant distance from the constant structural features of the tRNA body. The tRNA splicing endonuclease is also involved in mRNA processing via its association with pre-mRNA 3'-end processing factors, establishing a link between pre-tRNA splicing and pre-mRNA 3'-end formation, suggesting that the endonuclease subunits function in multiple RNA-processing events. The sequence is that of tRNA-splicing endonuclease subunit Sen34 (Tsen34) from Mus musculus (Mouse).